The sequence spans 173 residues: dCTP deaminase (173 aa).

DCTP is bound by residues 97–102 (RSSFAR) and Asp-113. The active-site Proton donor/acceptor is the Glu-123. DCTP contacts are provided by Tyr-155 and Gln-162.

The protein belongs to the dCTP deaminase family. In terms of assembly, homotrimer.

The enzyme catalyses dCTP + H2O + H(+) = dUTP + NH4(+). Its pathway is pyrimidine metabolism; dUMP biosynthesis; dUMP from dCTP (dUTP route): step 1/2. Functionally, catalyzes the deamination of dCTP to dUTP. This Acidianus ambivalens (Desulfurolobus ambivalens) protein is dCTP deaminase.